The following is a 285-amino-acid chain: MKIKDALIKAYSVLKETNDEFYMEDSQILLSYVLKKDRIFLITNREYEIEENSLKQYFDYINMRKKKMPIRYITEKCEFMGLDFHVEKGVLIPRPDTEILVEAVLEYIELNNYKKVCDVCTGSGAIGLSIAKYAKDVEVLCSDISPDAIRVSKINRQGLNLEDRVKIENGDLLEKPIERGEKFDIVVSNPPYIREDEIPKLMDDVKDYEPIIALVGGEDGLDFYRRITSMSKKVLKPGGLIAYEIGSDEANEVSNILENEGFVSIETRKDFARMDRVVLAVRGGL.

The S-adenosyl-L-methionine site is built by D143 and N189. Residue 189–192 (NPPY) coordinates substrate.

Belongs to the protein N5-glutamine methyltransferase family. PrmC subfamily.

It carries out the reaction L-glutaminyl-[peptide chain release factor] + S-adenosyl-L-methionine = N(5)-methyl-L-glutaminyl-[peptide chain release factor] + S-adenosyl-L-homocysteine + H(+). Methylates the class 1 translation termination release factors RF1/PrfA and RF2/PrfB on the glutamine residue of the universally conserved GGQ motif. The chain is Release factor glutamine methyltransferase from Clostridium acetobutylicum (strain ATCC 824 / DSM 792 / JCM 1419 / IAM 19013 / LMG 5710 / NBRC 13948 / NRRL B-527 / VKM B-1787 / 2291 / W).